Consider the following 319-residue polypeptide: ATP-dependent 6-phosphofructokinase (319 aa).

G11 contributes to the ATP binding site. 21 to 25 (RSIAR) contacts ADP. Residues 72-73 (RC) and 102-105 (GDGS) each bind ATP. Residue D103 coordinates Mg(2+). A substrate-binding site is contributed by 125 to 127 (TID). Catalysis depends on D127, which acts as the Proton acceptor. R154 is a binding site for ADP. Residues R162 and 169–171 (MGR) contribute to the substrate site. Residues 185–187 (GAE), R211, and 213–215 (KLH) each bind ADP. Residues E222, K243, and 249–252 (HVQR) contribute to the substrate site.

The protein belongs to the phosphofructokinase type A (PFKA) family. ATP-dependent PFK group I subfamily. Prokaryotic clade 'B1' sub-subfamily. Homotetramer. Mg(2+) is required as a cofactor.

It localises to the cytoplasm. The enzyme catalyses beta-D-fructose 6-phosphate + ATP = beta-D-fructose 1,6-bisphosphate + ADP + H(+). Its pathway is carbohydrate degradation; glycolysis; D-glyceraldehyde 3-phosphate and glycerone phosphate from D-glucose: step 3/4. With respect to regulation, allosterically activated by ADP and other diphosphonucleosides, and allosterically inhibited by phosphoenolpyruvate. Functionally, catalyzes the phosphorylation of D-fructose 6-phosphate to fructose 1,6-bisphosphate by ATP, the first committing step of glycolysis. This is ATP-dependent 6-phosphofructokinase from Finegoldia magna (strain ATCC 29328 / DSM 20472 / WAL 2508) (Peptostreptococcus magnus).